The chain runs to 159 residues: Lipoprotein signal peptidase (159 aa).

The next 2 helical transmembrane spans lie at 59-79 (PMILIVSTTLILAALFLYVVF) and 87-107 (FLITFGLILGGGIGNGIDRIL). Residues Asp113 and Asp139 contribute to the active site. A helical transmembrane segment spans residues 131 to 151 (LWPVFNIADSAITIGACVLVI).

It belongs to the peptidase A8 family.

It is found in the cell inner membrane. It catalyses the reaction Release of signal peptides from bacterial membrane prolipoproteins. Hydrolyzes -Xaa-Yaa-Zaa-|-(S,diacylglyceryl)Cys-, in which Xaa is hydrophobic (preferably Leu), and Yaa (Ala or Ser) and Zaa (Gly or Ala) have small, neutral side chains.. It participates in protein modification; lipoprotein biosynthesis (signal peptide cleavage). Its function is as follows. This protein specifically catalyzes the removal of signal peptides from prolipoproteins. The protein is Lipoprotein signal peptidase of Chlorobium phaeobacteroides (strain BS1).